The sequence spans 442 residues: Glutamate-1-semialdehyde 2,1-aminomutase (442 aa).

Lys282 carries the N6-(pyridoxal phosphate)lysine modification.

It belongs to the class-III pyridoxal-phosphate-dependent aminotransferase family. HemL subfamily. As to quaternary structure, homodimer. The cofactor is pyridoxal 5'-phosphate.

The protein resides in the cytoplasm. It catalyses the reaction (S)-4-amino-5-oxopentanoate = 5-aminolevulinate. Its pathway is porphyrin-containing compound metabolism; protoporphyrin-IX biosynthesis; 5-aminolevulinate from L-glutamyl-tRNA(Glu): step 2/2. In Polaromonas naphthalenivorans (strain CJ2), this protein is Glutamate-1-semialdehyde 2,1-aminomutase.